A 51-amino-acid polypeptide reads, in one-letter code: UPF0337 protein NE0131 (51 aa).

Belongs to the UPF0337 (CsbD) family.

This Nitrosomonas europaea (strain ATCC 19718 / CIP 103999 / KCTC 2705 / NBRC 14298) protein is UPF0337 protein NE0131.